The sequence spans 170 residues: MASQSTDQPKSIHDFIVKDARGNDVDLSIYKGKVLLIVNVASQCGLTNSNYPELTKLYEQYKDKGLEILAFPCNQFGNQEPGDNEQIMEFACTRFKAEFPIFDKVDVNGSNAAPVYKYLKSSKGGLFGDGIKWNFTKFLVDRDGKVVDRYAPTTSPASIEKDIKKLIGTS.

The active site involves Cys-44.

This sequence belongs to the glutathione peroxidase family.

It is found in the cytoplasm. The enzyme catalyses a hydroperoxy polyunsaturated fatty acid + 2 glutathione = a hydroxy polyunsaturated fatty acid + glutathione disulfide + H2O. Protects cells and enzymes from oxidative damage, by catalyzing the reduction of hydrogen peroxide, lipid peroxides and organic hydroperoxide, by glutathione. The protein is Probable phospholipid hydroperoxide glutathione peroxidase (GPXMC1) of Mesembryanthemum crystallinum (Common ice plant).